A 501-amino-acid chain; its full sequence is Na(+)/H(+) antiporter NhaB (501 aa).

The next 11 membrane-spanning stretches (helical) occupy residues 24-44 (VILL…PGVA), 46-66 (WLLI…YPLL), 90-110 (VLTN…IYFM), 145-165 (FLDA…FFSV), 206-226 (LLMH…VGEP), 239-259 (FAGF…AGLA), 302-319 (ALWI…GLAF), 351-371 (FQES…VAVI), 395-415 (MFFI…VATV), 450-470 (VATP…IAPL), and 478-498 (MVIM…YMVT).

This sequence belongs to the NhaB Na(+)/H(+) (TC 2.A.34) antiporter family.

It localises to the cell inner membrane. The catalysed reaction is 2 Na(+)(in) + 3 H(+)(out) = 2 Na(+)(out) + 3 H(+)(in). In terms of biological role, na(+)/H(+) antiporter that extrudes sodium in exchange for external protons. In Marinobacter nauticus (strain ATCC 700491 / DSM 11845 / VT8) (Marinobacter aquaeolei), this protein is Na(+)/H(+) antiporter NhaB.